Consider the following 1113-residue polypeptide: Period circadian protein homolog 3 (1113 aa).

The segment at 1–48 (MDPCGDPAVPGGDCPQTRGPGLQGASGQEGPLQGTCVDSSHSEHEDRN) is disordered. Positions 54-63 (LIMVVQEMKK) match the Nuclear export signal 1 motif. PAS domains are found at residues 120-187 (LASE…PTQL) and 258-324 (YEAP…KVLK). In terms of domain architecture, PAC spans 333–376 (HSPVRFCTQNGEYVILDSSWSSFVNPWSRKVSFIIGRHKVRTSP). The Nuclear export signal 3 motif lies at 399–408 (LQEQIHKLLL). Over residues 418–427 (GYGSLGSSGS) the composition is skewed to low complexity. 5 disordered regions span residues 418–451 (GYGS…GQHE), 485–530 (VAET…SSSY), 561–580 (TSSS…SQRD), 718–742 (HSRC…DTSS), and 871–906 (LVPA…PFIS). Polar residues-rich tracts occupy residues 428 to 441 (QEQH…SESS) and 501 to 530 (FSSS…SSSY). Residues 551 to 750 (LKRKCISCTN…SSPGAHLCPH (200 aa)) are CSNK1E binding domain. Basic and acidic residues predominate over residues 566-580 (EEAKPIPEVDSSQRD). Positions 719–735 (SRCAGSERQKHKRKKLP) match the Nuclear localization signal motif. Positions 889–901 (RRVEENWEAHSEE) are enriched in basic and acidic residues. S907 bears the Phosphoserine mark. Residues 913–920 (LQLNLLQE) carry the Nuclear export signal 2 motif. The tract at residues 921–1010 (EMPAPSESAD…DRQRDEALPG (90 aa)) is disordered. Over residues 962–986 (ATATAQQESAAASGSSASSIYFSST) the composition is skewed to low complexity. A compositionally biased stretch (basic and acidic residues) spans 993–1007 (SENRQRPQDRQRDEA). Residues 1035 to 1113 (ERGREEVLKQ…LEQHPAEDTS (79 aa)) are CRY binding domain.

In terms of assembly, homodimer. Component of the circadian core oscillator, which includes the CRY proteins, CLOCK or NPAS2, BMAL1 or BMAL2, CSNK1D and/or CSNK1E, TIMELESS and the PER proteins. Interacts directly with PER1, PER2, CRY1, CRY2, and TIMELESS; interaction with CRY1 and CRY2 is weak and not rhythmic. Interacts with FBXW11 and BTRC. Phosphorylation by CSNK1E is weak and appears to require association with PER1 and translocation to the nucleus. Post-translationally, ubiquitinated. As to expression, widely expressed. Expressed in heart, brain, lung, liver, skeletal muscle, testis, and at low level in the spleen and kidney. In brain, mainly found in the SCN, hippocampus, piriform cortex, and cerebellum. Lower level of expression in the neocortex. Expression exhibits synchronous oscillations in liver, skeletal muscle and testis.

The protein localises to the cytoplasm. It localises to the nucleus. In terms of biological role, originally described as a core component of the circadian clock. The circadian clock, an internal time-keeping system, regulates various physiological processes through the generation of approximately 24 hour circadian rhythms in gene expression, which are translated into rhythms in metabolism and behavior. It is derived from the Latin roots 'circa' (about) and 'diem' (day) and acts as an important regulator of a wide array of physiological functions including metabolism, sleep, body temperature, blood pressure, endocrine, immune, cardiovascular, and renal function. Consists of two major components: the central clock, residing in the suprachiasmatic nucleus (SCN) of the brain, and the peripheral clocks that are present in nearly every tissue and organ system. Both the central and peripheral clocks can be reset by environmental cues, also known as Zeitgebers (German for 'timegivers'). The predominant Zeitgeber for the central clock is light, which is sensed by retina and signals directly to the SCN. The central clock entrains the peripheral clocks through neuronal and hormonal signals, body temperature and feeding-related cues, aligning all clocks with the external light/dark cycle. Circadian rhythms allow an organism to achieve temporal homeostasis with its environment at the molecular level by regulating gene expression to create a peak of protein expression once every 24 hours to control when a particular physiological process is most active with respect to the solar day. Transcription and translation of core clock components (CLOCK, NPAS2, BMAL1, BMAL2, PER1, PER2, PER3, CRY1 and CRY2) plays a critical role in rhythm generation, whereas delays imposed by post-translational modifications (PTMs) are important for determining the period (tau) of the rhythms (tau refers to the period of a rhythm and is the length, in time, of one complete cycle). A diurnal rhythm is synchronized with the day/night cycle, while the ultradian and infradian rhythms have a period shorter and longer than 24 hours, respectively. Disruptions in the circadian rhythms contribute to the pathology of cardiovascular diseases, cancer, metabolic syndromes and aging. A transcription/translation feedback loop (TTFL) forms the core of the molecular circadian clock mechanism. Transcription factors, CLOCK or NPAS2 and BMAL1 or BMAL2, form the positive limb of the feedback loop, act in the form of a heterodimer and activate the transcription of core clock genes and clock-controlled genes (involved in key metabolic processes), harboring E-box elements (5'-CACGTG-3') within their promoters. The core clock genes: PER1/2/3 and CRY1/2 which are transcriptional repressors form the negative limb of the feedback loop and interact with the CLOCK|NPAS2-BMAL1|BMAL2 heterodimer inhibiting its activity and thereby negatively regulating their own expression. This heterodimer also activates nuclear receptors NR1D1, NR1D2, RORA, RORB and RORG, which form a second feedback loop and which activate and repress BMAL1 transcription, respectively. Has a redundant role with the other PER proteins PER1 and PER2 and is not essential for the circadian rhythms maintenance. In contrast, plays an important role in sleep-wake timing and sleep homeostasis probably through the transcriptional regulation of sleep homeostasis-related genes, without influencing circadian parameters. Can bind heme. In Mus musculus (Mouse), this protein is Period circadian protein homolog 3 (Per3).